Reading from the N-terminus, the 539-residue chain is Glycine betaine transporter 2 (539 aa).

Helical transmembrane passes span 44 to 64 (LTNP…LLAL), 85 to 105 (FGAY…ALAF), 129 to 149 (IVLC…EPIA), 175 to 195 (FMHW…IVLM), 231 to 251 (CSII…GLQI), 265 to 285 (FITQ…SALS), 299 to 319 (IILS…SFII), 348 to 368 (WWTV…AIFI), 380 to 400 (LILS…SIVG), 426 to 446 (VLLA…LFLI), 480 to 500 (FWGL…SGGI), and 503 to 523 (LQSF…PSIL).

This sequence belongs to the BCCT transporter (TC 2.A.15) family.

It localises to the cell inner membrane. Functionally, involved in the uptake of the osmoprotectant glycine betaine. In Vibrio parahaemolyticus serotype O3:K6 (strain RIMD 2210633), this protein is Glycine betaine transporter 2.